We begin with the raw amino-acid sequence, 321 residues long: Trem-like transcript 2 protein (321 aa).

The signal sequence occupies residues 1-18 (MAPAFLLLLLLWPQGCVS). Residues 19–268 (GPSADSVYTK…PSIRHQDVYS (250 aa)) lie on the Extracellular side of the membrane. The Ig-like V-type domain maps to 20-121 (PSADSVYTKV…ILYPLMGFQL (102 aa)). Cystine bridges form between Cys41-Cys105 and Cys56-Cys63. Asn89 is a glycosylation site (N-linked (GlcNAc...) asparagine). Composition is skewed to polar residues over residues 189-220 (GYSF…NARD) and 227-241 (SIST…RSPT). The disordered stretch occupies residues 189-241 (GYSFTATSTTSQGPRRTMGSQTVTASPSNARDSSAGPESISTKSGDLSTRSPT). Residues 269–289 (TVLGVVLTLLVLMLIMVYGFW) traverse the membrane as a helical segment. Topologically, residues 290-321 (KKRHMASYSMCSDPSTRDPPGRPEPYVEVYLI) are cytoplasmic.

Interacts with CD276 and this interaction enhances T-cell activation. In terms of tissue distribution, detected in cultured B-cells, T-cell leukemia and monocyte leukemia. Expressed constitutively on CD8 T-cells and induced on CD4 T-cells after activation.

It is found in the cell membrane. Functionally, cell surface receptor that may play a role in the innate and adaptive immune response. Acts as a counter-receptor for CD276 and interaction with CD276 on T-cells enhances T-cell activation. This Homo sapiens (Human) protein is Trem-like transcript 2 protein (TREML2).